A 183-amino-acid polypeptide reads, in one-letter code: Holliday junction branch migration complex subunit RuvA (183 aa).

Residues 1–63 (MIVGLIGVVE…EDANLLYGFL (63 aa)) form a domain I region. Positions 64 to 139 (EESEKILFER…FFIQDENRPA (76 aa)) are domain II. Position 139 (A139) is a region of interest, flexible linker. Residues 139–183 (ARNEVFLALESLGFKSAEINKVLKTLKPNLSIEAAIKEALQQLRS) form a domain III region.

The protein belongs to the RuvA family. As to quaternary structure, homotetramer. Forms an RuvA(8)-RuvB(12)-Holliday junction (HJ) complex. HJ DNA is sandwiched between 2 RuvA tetramers; dsDNA enters through RuvA and exits via RuvB. An RuvB hexamer assembles on each DNA strand where it exits the tetramer. Each RuvB hexamer is contacted by two RuvA subunits (via domain III) on 2 adjacent RuvB subunits; this complex drives branch migration. In the full resolvosome a probable DNA-RuvA(4)-RuvB(12)-RuvC(2) complex forms which resolves the HJ.

The protein resides in the cytoplasm. The RuvA-RuvB-RuvC complex processes Holliday junction (HJ) DNA during genetic recombination and DNA repair, while the RuvA-RuvB complex plays an important role in the rescue of blocked DNA replication forks via replication fork reversal (RFR). RuvA specifically binds to HJ cruciform DNA, conferring on it an open structure. The RuvB hexamer acts as an ATP-dependent pump, pulling dsDNA into and through the RuvAB complex. HJ branch migration allows RuvC to scan DNA until it finds its consensus sequence, where it cleaves and resolves the cruciform DNA. The chain is Holliday junction branch migration complex subunit RuvA from Helicobacter pylori (strain HPAG1).